A 288-amino-acid polypeptide reads, in one-letter code: Elongation factor Ts (288 aa).

The tract at residues 82 to 85 is involved in Mg(2+) ion dislocation from EF-Tu; sequence TDFV.

This sequence belongs to the EF-Ts family.

The protein resides in the cytoplasm. Functionally, associates with the EF-Tu.GDP complex and induces the exchange of GDP to GTP. It remains bound to the aminoacyl-tRNA.EF-Tu.GTP complex up to the GTP hydrolysis stage on the ribosome. The sequence is that of Elongation factor Ts from Chlorobium phaeovibrioides (strain DSM 265 / 1930) (Prosthecochloris vibrioformis (strain DSM 265)).